Here is a 442-residue protein sequence, read N- to C-terminus: 3-phosphoshikimate 1-carboxyvinyltransferase (442 aa).

3 residues coordinate 3-phosphoshikimate: Lys-25, Ser-26, and Arg-30. Lys-25 serves as a coordination point for phosphoenolpyruvate. Gly-97 and Arg-125 together coordinate phosphoenolpyruvate. 3-phosphoshikimate is bound by residues Ser-170, Gln-172, Asp-323, and Lys-350. A phosphoenolpyruvate-binding site is contributed by Gln-172. Asp-323 acts as the Proton acceptor in catalysis. Phosphoenolpyruvate is bound by residues Arg-354 and Arg-399.

The protein belongs to the EPSP synthase family. Monomer.

The protein resides in the cytoplasm. The enzyme catalyses 3-phosphoshikimate + phosphoenolpyruvate = 5-O-(1-carboxyvinyl)-3-phosphoshikimate + phosphate. It participates in metabolic intermediate biosynthesis; chorismate biosynthesis; chorismate from D-erythrose 4-phosphate and phosphoenolpyruvate: step 6/7. Its function is as follows. Catalyzes the transfer of the enolpyruvyl moiety of phosphoenolpyruvate (PEP) to the 5-hydroxyl of shikimate-3-phosphate (S3P) to produce enolpyruvyl shikimate-3-phosphate and inorganic phosphate. The polypeptide is 3-phosphoshikimate 1-carboxyvinyltransferase (Bartonella henselae (strain ATCC 49882 / DSM 28221 / CCUG 30454 / Houston 1) (Rochalimaea henselae)).